We begin with the raw amino-acid sequence, 303 residues long: MDDFSSISLLSLAMLVGCYVSGIIPLAVNFSEEKLKLVTVLGAGLLCGTALAVIVPEGVHALYEEVLEAKHHDMGDIHKAKDAETGAEISAAHEHDHSNLHAYIGVSLVLGFVFMLLVDQIGSSHMHSADDPEAARAASSKITTTLGLVVHAAADGVALGAAASTSQTSVQLIVFVAIMLHKAPAAFGLVSFLMHAGLERNRIRKHLLVFALAAPVLSMLTYLGLSKSSKEALSEVNATGVAMLFSAGTFLYVATVHVLPEVGGMGHSHKPEVGATKGLSRLEVCALVLGCLIPLVLSIGHQH.

A helical transmembrane segment spans residues 7-27 (ISLLSLAMLVGCYVSGIIPLA). Asn29 is a glycosylation site (N-linked (GlcNAc...) asparagine). The next 5 membrane-spanning stretches (helical) occupy residues 35–55 (LKLV…AVIV), 102–122 (AYIG…DQIG), 142–162 (ITTT…LGAA), 172–192 (LIVF…LVSF), and 206–226 (HLLV…LGLS). An N-linked (GlcNAc...) asparagine glycan is attached at Asn237. Helical transmembrane passes span 240 to 260 (GVAM…HVLP) and 282 to 302 (LEVC…IGHQ).

It belongs to the ZIP transporter (TC 2.A.5) family.

It is found in the golgi apparatus. It localises to the trans-Golgi network membrane. The protein resides in the cell membrane. The protein localises to the cytoplasm. Its subcellular location is the perinuclear region. It is found in the mitochondrion. It localises to the nucleus. The catalysed reaction is Zn(2+)(in) = Zn(2+)(out). Functionally, transports zinc ions across cell and organelle membranes into the cytoplasm and regulates intracellular zinc homeostasis. Participates in the zinc ions efflux out of the secretory compartments. Also functions as a membrane androgen receptor that mediates, through a G protein, the non-classical androgen signaling pathway, characterized by the activation of MAPK3/MAPK1 (Erk1/2) and transcription factors CREB1 or ATF1. Moreover, has dual functions as a membrane-bound androgen receptor and as an androgen-dependent zinc transporter both of which are mediated through an inhibitory G protein (Gi) that mediates both MAP kinase and zinc signaling leading to the androgen-dependent apoptotic process. This is Zinc transporter ZIP9 from Xenopus tropicalis (Western clawed frog).